A 359-amino-acid polypeptide reads, in one-letter code: Probable dual-specificity RNA methyltransferase RlmN (359 aa).

The Proton acceptor role is filled by Glu93. The Radical SAM core domain occupies 107-337 (KSERVTLCVS…VTMRYEKGHD (231 aa)). Cys114 and Cys342 are disulfide-bonded. Residues Cys121, Cys125, and Cys128 each coordinate [4Fe-4S] cluster. S-adenosyl-L-methionine-binding positions include 168–169 (GE), Ser200, 223–225 (SLH), and Asn299. Cys342 (S-methylcysteine intermediate) is an active-site residue.

This sequence belongs to the radical SAM superfamily. RlmN family. [4Fe-4S] cluster is required as a cofactor.

The protein localises to the cytoplasm. The catalysed reaction is adenosine(2503) in 23S rRNA + 2 reduced [2Fe-2S]-[ferredoxin] + 2 S-adenosyl-L-methionine = 2-methyladenosine(2503) in 23S rRNA + 5'-deoxyadenosine + L-methionine + 2 oxidized [2Fe-2S]-[ferredoxin] + S-adenosyl-L-homocysteine. The enzyme catalyses adenosine(37) in tRNA + 2 reduced [2Fe-2S]-[ferredoxin] + 2 S-adenosyl-L-methionine = 2-methyladenosine(37) in tRNA + 5'-deoxyadenosine + L-methionine + 2 oxidized [2Fe-2S]-[ferredoxin] + S-adenosyl-L-homocysteine. Specifically methylates position 2 of adenine 2503 in 23S rRNA and position 2 of adenine 37 in tRNAs. The sequence is that of Probable dual-specificity RNA methyltransferase RlmN from Akkermansia muciniphila (strain ATCC BAA-835 / DSM 22959 / JCM 33894 / BCRC 81048 / CCUG 64013 / CIP 107961 / Muc).